The sequence spans 115 residues: SPbeta prophage-derived uncharacterized membrane protein YosE (115 aa).

3 helical membrane-spanning segments follow: residues Ile20 to Asn42, Val58 to Gly78, and Gly95 to Ile115.

The protein resides in the cell membrane. In Bacillus subtilis (strain 168), this protein is SPbeta prophage-derived uncharacterized membrane protein YosE (yosE).